We begin with the raw amino-acid sequence, 244 residues long: 3-deoxy-manno-octulosonate cytidylyltransferase (244 aa).

It belongs to the KdsB family.

It localises to the cytoplasm. It carries out the reaction 3-deoxy-alpha-D-manno-oct-2-ulosonate + CTP = CMP-3-deoxy-beta-D-manno-octulosonate + diphosphate. It functions in the pathway nucleotide-sugar biosynthesis; CMP-3-deoxy-D-manno-octulosonate biosynthesis; CMP-3-deoxy-D-manno-octulosonate from 3-deoxy-D-manno-octulosonate and CTP: step 1/1. It participates in bacterial outer membrane biogenesis; lipopolysaccharide biosynthesis. In terms of biological role, activates KDO (a required 8-carbon sugar) for incorporation into bacterial lipopolysaccharide in Gram-negative bacteria. The protein is 3-deoxy-manno-octulosonate cytidylyltransferase of Synechococcus elongatus (strain ATCC 33912 / PCC 7942 / FACHB-805) (Anacystis nidulans R2).